A 156-amino-acid chain; its full sequence is Small ribosomal subunit protein uS7 (156 aa).

This sequence belongs to the universal ribosomal protein uS7 family. In terms of assembly, part of the 30S ribosomal subunit. Contacts proteins S9 and S11.

Its function is as follows. One of the primary rRNA binding proteins, it binds directly to 16S rRNA where it nucleates assembly of the head domain of the 30S subunit. Is located at the subunit interface close to the decoding center, probably blocks exit of the E-site tRNA. The sequence is that of Small ribosomal subunit protein uS7 from Pelobacter propionicus (strain DSM 2379 / NBRC 103807 / OttBd1).